Reading from the N-terminus, the 351-residue chain is MHREDDSTSTGRREERLSTGKGDSLQPGPDQRIFQTALYRPQRHGLILFPQRLYGNCLAPLAYSNYVAPRELHSSIHAEGRTLSVRLIMLFVNTSKRSRTLPPVGSTVMRILVNLCQLLSAEFQLLQGSQRLIFKLCYRTCPDQRRGDTRVAQCPGDSHLSQCLTATFRNGVQRPDAPQQLFVLCTGLQGAALIRPRPFGDSVQIAGGQQSLSQRRKDNAAGSDLAKGIEQAIFDPAIEHVVIGLMNEKRNPLFLQDRGSLLRQFRRIAGNPHIKRLALTVQMRERSHRLFQRRGGVHTVRIEDVDIVEPHPLQRPGRGWRSGICDLPPMPPYGPGHMSQPAFEEMIISSR.

Residues 1-18 are compositionally biased toward basic and acidic residues; it reads MHREDDSTSTGRREERLS. Residues 1-29 are disordered; it reads MHREDDSTSTGRREERLSTGKGDSLQPGP.

Its function is as follows. Confers an increase in glyphosate resistance when expressed in E.coli. The sequence is that of Increased glyphosate resistance protein from Pseudomonas sp. (strain PG2982).